The primary structure comprises 606 residues: Sulfite reductase [NADPH] flavoprotein alpha-component (606 aa).

In terms of domain architecture, Flavodoxin-like spans 64–202 (VTLISASQTG…QAQQWRQQVV (139 aa)). FMN contacts are provided by residues 70 to 75 (SQTGNA), 117 to 120 (STQG), and 153 to 162 (LGDTSYEHFC). The segment covering 212–234 (QSTAPTQSTTPAAAAITSGGTTT) has biased composition (low complexity). The interval 212-235 (QSTAPTQSTTPAAAAITSGGTTTV) is disordered. Residues 241 to 455 (TAPLTAQLSV…IEHNDNFRLP (215 aa)) form the FAD-binding FR-type domain. FAD contacts are provided by residues threonine 329, lysine 363, 393 to 396 (RLYS), 411 to 413 (TVG), tyrosine 417, and 426 to 429 (GGAS). Residues 526–527 (SR), 532–536 (KIYVQ), and aspartate 568 each bind NADP(+). Position 606 (tyrosine 606) interacts with FAD.

The protein belongs to the NADPH-dependent sulphite reductase flavoprotein subunit CysJ family. It in the N-terminal section; belongs to the flavodoxin family. In the C-terminal section; belongs to the flavoprotein pyridine nucleotide cytochrome reductase family. Alpha(8)-beta(8). The alpha component is a flavoprotein, the beta component is a hemoprotein. It depends on FAD as a cofactor. Requires FMN as cofactor.

The catalysed reaction is hydrogen sulfide + 3 NADP(+) + 3 H2O = sulfite + 3 NADPH + 4 H(+). It participates in sulfur metabolism; hydrogen sulfide biosynthesis; hydrogen sulfide from sulfite (NADPH route): step 1/1. Component of the sulfite reductase complex that catalyzes the 6-electron reduction of sulfite to sulfide. This is one of several activities required for the biosynthesis of L-cysteine from sulfate. The flavoprotein component catalyzes the electron flow from NADPH -&gt; FAD -&gt; FMN to the hemoprotein component. The protein is Sulfite reductase [NADPH] flavoprotein alpha-component of Yersinia pestis bv. Antiqua (strain Antiqua).